Here is a 195-residue protein sequence, read N- to C-terminus: Dihydroneopterin triphosphate diphosphatase (195 aa).

Asp73 (proton acceptor) is an active-site residue.

This sequence belongs to the HAM1 NTPase family. It depends on Mn(2+) as a cofactor.

The catalysed reaction is 7,8-dihydroneopterin 3'-triphosphate + H2O = 7,8-dihydroneopterin 3'-phosphate + diphosphate + H(+). It participates in cofactor biosynthesis; tetrahydrofolate biosynthesis. Functionally, pyrophosphatase involved in the biosynthesis of tetrahydrofolate. Catalyzes the hydrolysis of dihydroneopterin triphosphate (DHNTP) to dihydroneopterin monophosphate (DHNMP) and pyrophosphate. Shows a strict substrate specificity. Has only weak activity with GTP, ITP, XTP and dTTP, and cannot use ATP, UTP, CTP, NAD(+), NADH, diadenosine triphosphate, diadenosine tetraphosphate, ADP-ribose and UDP-glucose. The polypeptide is Dihydroneopterin triphosphate diphosphatase (Limosilactobacillus reuteri (strain DSM 20016) (Lactobacillus reuteri)).